The primary structure comprises 230 residues: Ribonuclease 3 (230 aa).

An RNase III domain is found at 5 to 134 (NDTISKVINY…LIGAIYIDGG (130 aa)). Residue glutamate 47 participates in Mg(2+) binding. Residue aspartate 51 is part of the active site. The Mg(2+) site is built by asparagine 120 and glutamate 123. The active site involves glutamate 123. The region spanning 159–228 (DPKTSLQEWT…AELILEKIKK (70 aa)) is the DRBM domain.

It belongs to the ribonuclease III family. In terms of assembly, homodimer. The cofactor is Mg(2+).

It is found in the cytoplasm. It carries out the reaction Endonucleolytic cleavage to 5'-phosphomonoester.. Functionally, digests double-stranded RNA. Involved in the processing of primary rRNA transcript to yield the immediate precursors to the large and small rRNAs (23S and 16S). Processes some mRNAs, and tRNAs when they are encoded in the rRNA operon. Processes pre-crRNA and tracrRNA of type II CRISPR loci if present in the organism. The chain is Ribonuclease 3 from Wolbachia pipientis subsp. Culex pipiens (strain wPip).